The following is a 257-amino-acid chain: Imidazole glycerol phosphate synthase subunit HisF (257 aa).

Residues aspartate 11 and aspartate 130 contribute to the active site.

This sequence belongs to the HisA/HisF family. In terms of assembly, heterodimer of HisH and HisF.

It is found in the cytoplasm. The catalysed reaction is 5-[(5-phospho-1-deoxy-D-ribulos-1-ylimino)methylamino]-1-(5-phospho-beta-D-ribosyl)imidazole-4-carboxamide + L-glutamine = D-erythro-1-(imidazol-4-yl)glycerol 3-phosphate + 5-amino-1-(5-phospho-beta-D-ribosyl)imidazole-4-carboxamide + L-glutamate + H(+). It participates in amino-acid biosynthesis; L-histidine biosynthesis; L-histidine from 5-phospho-alpha-D-ribose 1-diphosphate: step 5/9. In terms of biological role, IGPS catalyzes the conversion of PRFAR and glutamine to IGP, AICAR and glutamate. The HisF subunit catalyzes the cyclization activity that produces IGP and AICAR from PRFAR using the ammonia provided by the HisH subunit. This chain is Imidazole glycerol phosphate synthase subunit HisF, found in Photobacterium profundum (strain SS9).